The sequence spans 256 residues: Imidazole glycerol phosphate synthase subunit HisF (256 aa).

Residues aspartate 11 and aspartate 130 contribute to the active site.

The protein belongs to the HisA/HisF family. In terms of assembly, heterodimer of HisH and HisF.

The protein resides in the cytoplasm. The catalysed reaction is 5-[(5-phospho-1-deoxy-D-ribulos-1-ylimino)methylamino]-1-(5-phospho-beta-D-ribosyl)imidazole-4-carboxamide + L-glutamine = D-erythro-1-(imidazol-4-yl)glycerol 3-phosphate + 5-amino-1-(5-phospho-beta-D-ribosyl)imidazole-4-carboxamide + L-glutamate + H(+). Its pathway is amino-acid biosynthesis; L-histidine biosynthesis; L-histidine from 5-phospho-alpha-D-ribose 1-diphosphate: step 5/9. Its function is as follows. IGPS catalyzes the conversion of PRFAR and glutamine to IGP, AICAR and glutamate. The HisF subunit catalyzes the cyclization activity that produces IGP and AICAR from PRFAR using the ammonia provided by the HisH subunit. The sequence is that of Imidazole glycerol phosphate synthase subunit HisF from Psychrobacter sp. (strain PRwf-1).